The following is a 525-amino-acid chain: Peptide chain release factor 3 (525 aa).

In terms of domain architecture, tr-type G spans 11–279; the sequence is ERRRTFAIIS…AFVDMAPAPE (269 aa). Residues 20 to 27, 88 to 92, and 142 to 145 contribute to the GTP site; these read SHPDAGKT, DTPGH, and NKLD.

It belongs to the TRAFAC class translation factor GTPase superfamily. Classic translation factor GTPase family. PrfC subfamily.

It is found in the cytoplasm. Functionally, increases the formation of ribosomal termination complexes and stimulates activities of RF-1 and RF-2. It binds guanine nucleotides and has strong preference for UGA stop codons. It may interact directly with the ribosome. The stimulation of RF-1 and RF-2 is significantly reduced by GTP and GDP, but not by GMP. The polypeptide is Peptide chain release factor 3 (Latilactobacillus sakei subsp. sakei (strain 23K) (Lactobacillus sakei subsp. sakei)).